The primary structure comprises 555 residues: Sulfite reductase [ferredoxin] 2 (555 aa).

A disordered region spans residues 1–31 (MTTARPAKARNEGQWALGNREPLNPNEEMKQ). Positions 69–161 (YTQREQGYDG…AVGLRTTEAC (93 aa)) form a cross-link, 3'-(S-cysteinyl)-tyrosine (Tyr-Cys). 4 residues coordinate [4Fe-4S] cluster: Cys417, Cys423, Cys463, and Cys467. Cys467 contributes to the siroheme binding site.

The protein belongs to the nitrite and sulfite reductase 4Fe-4S domain family. In terms of assembly, monomer. Siroheme serves as cofactor. It depends on [4Fe-4S] cluster as a cofactor.

The catalysed reaction is hydrogen sulfide + 6 oxidized [2Fe-2S]-[ferredoxin] + 3 H2O = sulfite + 6 reduced [2Fe-2S]-[ferredoxin] + 7 H(+). Catalyzes the reduction of sulfite to sulfide, a step in the biosynthesis of sulfur-containing amino acids and cofactors. In Mycolicibacterium paratuberculosis (strain ATCC BAA-968 / K-10) (Mycobacterium paratuberculosis), this protein is Sulfite reductase [ferredoxin] 2 (sir2).